Here is a 297-residue protein sequence, read N- to C-terminus: MEIGLREWLILIGIIVIAGILFDGWRRMRGGKGKLKFRLDRSYSNLPDEEGGSAEVLGPSRVLDTHKEPELDESDLPSLSASARDREREPKPVKASKRGKRASAAADVHQGDLNLSAEPREPDLFSDSDDDFAADNNRSSGAAPASNSVKELPPAEEVLVISVISRDEGGFKGPALLQNILESGLRFGEMDIFHRHESMAGHGEVLFSMANAVKPGVFDLDDIDHFSTRAVSFFLGLPGPRHPKQAFDVMVAAARKLAHELNGELKDDQRSVLTAQTIEHYRQRIVEFERRALTQKR.

Position 1 (M1) is a topological domain, periplasmic. The helical transmembrane segment at 2 to 22 (EIGLREWLILIGIIVIAGILF) threads the bilayer. At 23–297 (DGWRRMRGGK…FERRALTQKR (275 aa)) the chain is on the cytoplasmic side. The interval 48–151 (DEEGGSAEVL…AAPASNSVKE (104 aa)) is disordered. Over residues 83–92 (ARDREREPKP) the composition is skewed to basic and acidic residues. The segment covering 124-133 (LFSDSDDDFA) has biased composition (acidic residues).

The protein belongs to the ZipA family. In terms of assembly, interacts with FtsZ via their C-terminal domains.

The protein localises to the cell inner membrane. Its function is as follows. Essential cell division protein that stabilizes the FtsZ protofilaments by cross-linking them and that serves as a cytoplasmic membrane anchor for the Z ring. Also required for the recruitment to the septal ring of downstream cell division proteins. The chain is Cell division protein ZipA from Pseudomonas putida (strain ATCC 47054 / DSM 6125 / CFBP 8728 / NCIMB 11950 / KT2440).